A 66-amino-acid polypeptide reads, in one-letter code: Toxin Boma6c (66 aa).

Positions 2 to 64 (RDAYIAQNYN…VPIRIPGKCH (63 aa)) constitute an LCN-type CS-alpha/beta domain. 4 disulfide bridges follow: Cys-12/Cys-63, Cys-16/Cys-36, Cys-22/Cys-46, and Cys-26/Cys-48.

This sequence belongs to the long (4 C-C) scorpion toxin superfamily. Sodium channel inhibitor family. Alpha subfamily. Expressed by the venom gland.

The protein resides in the secreted. Functionally, alpha toxins bind voltage-independently at site-3 of sodium channels (Nav) and inhibit the inactivation of the activated channels, thereby blocking neuronal transmission. The sequence is that of Toxin Boma6c from Buthus occitanus mardochei (Moroccan scorpion).